The primary structure comprises 372 residues: Rab9 effector protein with kelch motifs (372 aa).

Kelch repeat units follow at residues 49-95 (KVFI…FIPS), 100-146 (SIWV…TSSA), 151-203 (QLYV…AAGT), 204-250 (KLFI…SAVA), and 254-303 (HLYV…IIPW). The disordered stretch occupies residues 309–341 (SEKEDSNSATVNRDAEKGDSTEKGVTQGGDSQE). Over residues 321-330 (RDAEKGDSTE) the composition is skewed to basic and acidic residues. One copy of the Kelch 6 repeat lies at 349–372 (LCFVFGGMNTEGEIYDDCIVTAVD).

As to quaternary structure, interacts with PIKFYVE; the interaction recruits RABEPK to the endosomal membrane. Interacts with RAB9 in its GTP-bound conformation. Phosphorylated on Ser residues by PIKFYVE.

It localises to the cytoplasm. The protein resides in the endosome membrane. Rab9 effector required for endosome to trans-Golgi network (TGN) transport. The polypeptide is Rab9 effector protein with kelch motifs (RABEPK) (Bos taurus (Bovine)).